The primary structure comprises 357 residues: Fulicin peptides (357 aa).

The N-terminal stretch at 1-17 is a signal peptide; the sequence is MQPTVLLILMTSCLTYQ. Positions 18–119 are excised as a propeptide; sequence VIADKPKGNH…VDGSQGHLEP (102 aa). D-asparagine is present on Asn123. Residue Val126 is modified to Valine amide. Residues 130-194 constitute a propeptide that is removed on maturation; it reads NTLPEEAGSF…YNTMNEDEAS (65 aa). Residues Val201 and Val209 each carry the valine amide modification. Leucine amide occurs at positions 217 and 226. Ile233 and Ile242 each carry isoleucine amide. Valine amide is present on residues Val250 and Val259. The propeptide occupies 263-298; sequence NQGVFTVSPSSTKISFDDNYLPYLSSVDAGDLSDVN. Position 305 is a leucine amide (Leu305). Positions 311-357 are excised as a propeptide; the sequence is TAEQDETSQRSNERLVALLQNTGFRKRLSRMLQNQRLVEHYPEFIGK.

Found in central ganglia and the ventricles and atria of the heart.

Its function is as follows. Potentiates tetanic contraction of the penis retractor muscle at very low concentrations, and also shows modulatory actions on the activity of the buccal and ventricular muscles and the central ganglionic neurons. This chain is Fulicin peptides, found in Lissachatina fulica (Giant African land snail).